We begin with the raw amino-acid sequence, 303 residues long: uncharacterized protein (303 aa).

Ser63 is subject to Phosphoserine.

The protein belongs to the HAD-like hydrolase superfamily.

It is found in the cytoplasm. The protein resides in the nucleus. This is an uncharacterized protein from Schizosaccharomyces pombe (strain 972 / ATCC 24843) (Fission yeast).